Consider the following 24-residue polypeptide: Coenzyme PQQ synthesis protein A (24 aa).

Residues E16–Y20 constitute a cross-link (pyrroloquinoline quinone (Glu-Tyr)).

It belongs to the PqqA family.

Its pathway is cofactor biosynthesis; pyrroloquinoline quinone biosynthesis. Its function is as follows. Required for coenzyme pyrroloquinoline quinone (PQQ) biosynthesis. PQQ is probably formed by cross-linking a specific glutamate to a specific tyrosine residue and excising these residues from the peptide. This is Coenzyme PQQ synthesis protein A from Methylococcus capsulatus (strain ATCC 33009 / NCIMB 11132 / Bath).